The chain runs to 133 residues: Ribosome-binding factor A (133 aa).

Belongs to the RbfA family. Monomer. Binds 30S ribosomal subunits, but not 50S ribosomal subunits or 70S ribosomes.

It localises to the cytoplasm. Functionally, one of several proteins that assist in the late maturation steps of the functional core of the 30S ribosomal subunit. Associates with free 30S ribosomal subunits (but not with 30S subunits that are part of 70S ribosomes or polysomes). Required for efficient processing of 16S rRNA. May interact with the 5'-terminal helix region of 16S rRNA. The chain is Ribosome-binding factor A from Pseudomonas fluorescens (strain ATCC BAA-477 / NRRL B-23932 / Pf-5).